The sequence spans 104 residues: Inner membrane protein YjeO (104 aa).

Topologically, residues 1–5 (MSARM) are cytoplasmic. The helical transmembrane segment at 6-26 (FVLCCIWFIVAFLWITITSAL) threads the bilayer. At 27–52 (DKEWMIDGRGINNVCDVLMYLEEDDT) the chain is on the periplasmic side. A helical transmembrane segment spans residues 53 to 73 (RDVGVIMTLPLFFPFLWFALW). The Cytoplasmic portion of the chain corresponds to 74–77 (RKKR). The helical transmembrane segment at 78–98 (GWFMYATALAIFGYWLWQFFL) threads the bilayer. At 99-104 (RYQFCL) the chain is on the periplasmic side.

The protein localises to the cell inner membrane. In Escherichia coli (strain K12), this protein is Inner membrane protein YjeO (yjeO).